A 270-amino-acid polypeptide reads, in one-letter code: Phosphatidylglycerol--prolipoprotein diacylglyceryl transferase (270 aa).

4 helical membrane passes run 19–39, 54–74, 92–112, and 116–136; these read FPVYWYGVIIGTGVLLGLWLA, IDLVLIAVPIAILFARMYYVI, QGGLAIHGGLIGAVITGILFA, and GLSFWKLADIAAPSILLGQAI. R138 provides a ligand contact to a 1,2-diacyl-sn-glycero-3-phospho-(1'-sn-glycerol). A run of 3 helical transmembrane segments spans residues 178–198, 206–226, and 236–256; these read HPTFLYESLWNFAGVILLLAL, GELFFTYLIWYSVGRFFVEGL, and LRIAQVMSIGIVVISIIFIIV.

Belongs to the Lgt family.

It is found in the cell membrane. It catalyses the reaction L-cysteinyl-[prolipoprotein] + a 1,2-diacyl-sn-glycero-3-phospho-(1'-sn-glycerol) = an S-1,2-diacyl-sn-glyceryl-L-cysteinyl-[prolipoprotein] + sn-glycerol 1-phosphate + H(+). The protein operates within protein modification; lipoprotein biosynthesis (diacylglyceryl transfer). Its function is as follows. Catalyzes the transfer of the diacylglyceryl group from phosphatidylglycerol to the sulfhydryl group of the N-terminal cysteine of a prolipoprotein, the first step in the formation of mature lipoproteins. This is Phosphatidylglycerol--prolipoprotein diacylglyceryl transferase from Bacillus mycoides (strain KBAB4) (Bacillus weihenstephanensis).